The chain runs to 560 residues: Membrane protein insertase YidC (560 aa).

The helical transmembrane segment at 1–21 (MDIKRTILIAALAVVSYVMVL) threads the bilayer. Positions 42–66 (VAPGLPDGVPAGNNGASADVPSANA) are disordered. 5 helical membrane passes run 341–361 (LELT…FWLL), 367–387 (LLGN…GLFF), 437–457 (LGGC…YWVL), 468–488 (WMLW…PIIM), and 515–535 (PIIF…YWVV).

Belongs to the OXA1/ALB3/YidC family. Type 1 subfamily. Interacts with the Sec translocase complex via SecD. Specifically interacts with transmembrane segments of nascent integral membrane proteins during membrane integration.

The protein localises to the cell inner membrane. Required for the insertion and/or proper folding and/or complex formation of integral membrane proteins into the membrane. Involved in integration of membrane proteins that insert both dependently and independently of the Sec translocase complex, as well as at least some lipoproteins. Aids folding of multispanning membrane proteins. The chain is Membrane protein insertase YidC from Pseudomonas putida (strain GB-1).